A 303-amino-acid polypeptide reads, in one-letter code: Bifunctional protein FolD (303 aa).

NADP(+) contacts are provided by residues 165-167, Ser190, and Ile231; that span reads GRS.

The protein belongs to the tetrahydrofolate dehydrogenase/cyclohydrolase family. Homodimer.

The enzyme catalyses (6R)-5,10-methylene-5,6,7,8-tetrahydrofolate + NADP(+) = (6R)-5,10-methenyltetrahydrofolate + NADPH. The catalysed reaction is (6R)-5,10-methenyltetrahydrofolate + H2O = (6R)-10-formyltetrahydrofolate + H(+). The protein operates within one-carbon metabolism; tetrahydrofolate interconversion. Its function is as follows. Catalyzes the oxidation of 5,10-methylenetetrahydrofolate to 5,10-methenyltetrahydrofolate and then the hydrolysis of 5,10-methenyltetrahydrofolate to 10-formyltetrahydrofolate. The protein is Bifunctional protein FolD of Prochlorococcus marinus (strain NATL1A).